The following is a 741-amino-acid chain: NAD(P)H-quinone oxidoreductase subunit 5, chloroplastic (741 aa).

16 helical membrane-spanning segments follow: residues 9–29 (WIIP…LLLF), 40–60 (WTFL…YLSI), 89–109 (IDPL…LVLI), 125–145 (FAYM…SNLI), 147–167 (VYFF…FWFT), 185–205 (GDFG…SFEF), 221–241 (VNLL…IAKS), 258–278 (TPIS…FLVA), 280–300 (LLPL…IGII), 327–347 (LGYM…FHLI), 354–374 (ALLF…VGYS), 396–416 (TAFL…CFWS), 425–445 (LLFS…TAFY), 547–567 (ILFP…IGIP), 602–622 (FLQN…IAYC), and 720–740 (ISSY…ILFY).

This sequence belongs to the complex I subunit 5 family. As to quaternary structure, NDH is composed of at least 16 different subunits, 5 of which are encoded in the nucleus.

The protein resides in the plastid. It is found in the chloroplast thylakoid membrane. The catalysed reaction is a plastoquinone + NADH + (n+1) H(+)(in) = a plastoquinol + NAD(+) + n H(+)(out). It carries out the reaction a plastoquinone + NADPH + (n+1) H(+)(in) = a plastoquinol + NADP(+) + n H(+)(out). Functionally, NDH shuttles electrons from NAD(P)H:plastoquinone, via FMN and iron-sulfur (Fe-S) centers, to quinones in the photosynthetic chain and possibly in a chloroplast respiratory chain. The immediate electron acceptor for the enzyme in this species is believed to be plastoquinone. Couples the redox reaction to proton translocation, and thus conserves the redox energy in a proton gradient. The chain is NAD(P)H-quinone oxidoreductase subunit 5, chloroplastic (ndhF) from Arabis hirsuta (Hairy rock-cress).